The chain runs to 263 residues: Glutathione S-transferase F8, chloroplastic (263 aa).

The N-terminal 49 residues, 1 to 49, are a transit peptide targeting the chloroplast; that stretch reads MGAIQARLPLFLSPPSIKHHTFLHSSSSNSNFKIRSNKSSSSSSSSIIM. One can recognise a GST N-terminal domain in the interval 50–131; that stretch reads ASIKVHGVPM…YLAEEYSEKG (82 aa). Glutathione contacts are provided by residues 60–61, 89–90, 102–103, and 115–116; these read ST, HK, QI, and ES. The GST C-terminal domain maps to 139–263; that stretch reads CKKVKATTNV…WAKVIDLQKQ (125 aa). Threonine 177 carries the post-translational modification Phosphothreonine.

It belongs to the GST superfamily. Phi family. Isoform 1 is predominantly expressed in leaves and isoform 2 in roots.

It localises to the plastid. It is found in the chloroplast. The protein resides in the cytoplasm. The protein localises to the cytosol. The catalysed reaction is RX + glutathione = an S-substituted glutathione + a halide anion + H(+). In vitro, possesses glutathione S-transferase activity toward 1-chloro-2,4-dinitrobenzene (CDNB) and glutathione peroxidase activity toward cumene hydroperoxide and linoleic acid-13-hydroperoxide. May be involved in the conjugation of reduced glutathione to a wide number of exogenous and endogenous hydrophobic electrophiles and have a detoxification role against certain herbicides. This is Glutathione S-transferase F8, chloroplastic (GSTF8) from Arabidopsis thaliana (Mouse-ear cress).